A 103-amino-acid polypeptide reads, in one-letter code: Small ribosomal subunit protein uS10 (103 aa).

It belongs to the universal ribosomal protein uS10 family. In terms of assembly, part of the 30S ribosomal subunit.

Its function is as follows. Involved in the binding of tRNA to the ribosomes. The chain is Small ribosomal subunit protein uS10 from Chlorobium limicola (strain DSM 245 / NBRC 103803 / 6330).